The chain runs to 467 residues: Chromosomal replication initiator protein DnaA (467 aa).

Positions 1–90 (MSLSLWQQCL…KPVTQTPQAA (90 aa)) are domain I, interacts with DnaA modulators. The interval 91–130 (VTSNVAAPAQVAQTQPQRAAPSMRSGWDNVPAPAEPTYRS) is domain II. Residues 131–347 (NVNVKHTFDN…GALNRVIANA (217 aa)) are domain III, AAA+ region. Positions 175, 177, 178, and 179 each coordinate ATP. The segment at 348-467 (NFTGRAITID…FSNLIRTLSS (120 aa)) is domain IV, binds dsDNA.

It belongs to the DnaA family. Oligomerizes as a right-handed, spiral filament on DNA at oriC.

The protein resides in the cytoplasm. Its function is as follows. Plays an essential role in the initiation and regulation of chromosomal replication. ATP-DnaA binds to the origin of replication (oriC) to initiate formation of the DNA replication initiation complex once per cell cycle. Binds the DnaA box (a 9 base pair repeat at the origin) and separates the double-stranded (ds)DNA. Forms a right-handed helical filament on oriC DNA; dsDNA binds to the exterior of the filament while single-stranded (ss)DNA is stabiized in the filament's interior. The ATP-DnaA-oriC complex binds and stabilizes one strand of the AT-rich DNA unwinding element (DUE), permitting loading of DNA polymerase. After initiation quickly degrades to an ADP-DnaA complex that is not apt for DNA replication. Binds acidic phospholipids. The chain is Chromosomal replication initiator protein DnaA from Escherichia coli (strain ATCC 8739 / DSM 1576 / NBRC 3972 / NCIMB 8545 / WDCM 00012 / Crooks).